The sequence spans 354 residues: Ferrochelatase (354 aa).

Residues His214 and Glu295 each contribute to the Fe cation site.

This sequence belongs to the ferrochelatase family.

Its subcellular location is the cytoplasm. It carries out the reaction heme b + 2 H(+) = protoporphyrin IX + Fe(2+). The protein operates within porphyrin-containing compound metabolism; protoheme biosynthesis; protoheme from protoporphyrin-IX: step 1/1. Functionally, catalyzes the ferrous insertion into protoporphyrin IX. In Burkholderia ambifaria (strain ATCC BAA-244 / DSM 16087 / CCUG 44356 / LMG 19182 / AMMD) (Burkholderia cepacia (strain AMMD)), this protein is Ferrochelatase.